Consider the following 301-residue polypeptide: Type II restriction enzyme BslI subunit beta (301 aa).

The segment at 62–82 (CPDGHTKWNQNLTKEMTCSEC) adopts a CHC2-type zinc-finger fold.

As to quaternary structure, heterotetramer of two alpha and two beta subunits. The alpha subunit is believed to be responsible for DNA recognition, while the beta subunit is thought to mediate cleavage. Requires Zn(2+) as cofactor.

The catalysed reaction is Endonucleolytic cleavage of DNA to give specific double-stranded fragments with terminal 5'-phosphates.. Functionally, a P subtype restriction enzyme that recognizes the double-stranded sequence 5'-CCN(7)GG-3' and cleaves after N-7. In Bacillus sp. (strain NEB-606), this protein is Type II restriction enzyme BslI subunit beta.